The primary structure comprises 662 residues: Probable conjugal transfer protein TrbE part 2 (662 aa).

307-314 (GPTGSGKS) is an ATP binding site.

Belongs to the TrbE/VirB4 family.

This is Probable conjugal transfer protein TrbE part 2 (trbEB) from Sinorhizobium fredii (strain NBRC 101917 / NGR234).